The following is a 193-amino-acid chain: uncharacterized protein (193 aa).

This is an uncharacterized protein from Saccharomyces cerevisiae (strain ATCC 204508 / S288c) (Baker's yeast).